The sequence spans 263 residues: Fructose-bisphosphate aldolase class 1 (263 aa).

Residues 24–25, H29, D33, and W144 contribute to the substrate site; that span reads DH. Y146 (proton donor) is an active-site residue. Substrate is bound by residues R148, 177 to 179, 202 to 204, and 231 to 232; these read KIK, SGG, and GR. The active-site Schiff-base intermediate with dihydroxyacetone-P is the K177.

This sequence belongs to the DeoC/FbaB aldolase family. In terms of assembly, homodecamer (dimer of pentamers).

The protein localises to the cytoplasm. It catalyses the reaction beta-D-fructose 1,6-bisphosphate = D-glyceraldehyde 3-phosphate + dihydroxyacetone phosphate. With respect to regulation, activated by citrate. Catalyzes the reversible cleavage of fructose 1,6-bisphosphate (FBP) to glyceraldehyde 3-phosphate (GAP) and dihydroxyacetone phosphate (DHAP). The polypeptide is Fructose-bisphosphate aldolase class 1 (fba) (Thermoproteus tenax (strain ATCC 35583 / DSM 2078 / JCM 9277 / NBRC 100435 / Kra 1)).